The chain runs to 467 residues: Rhamnulokinase (467 aa).

11–15 (ASSGR) contributes to the ATP binding site. Substrate is bound by residues alanine 78 and 235 to 237 (HDT). Aspartate 236 (proton acceptor) is an active-site residue. An ATP-binding site is contributed by threonine 257. Asparagine 294 contacts substrate. Glutamine 302 provides a ligand contact to ATP. The cysteines at positions 351 and 368 are disulfide-linked. Residue glycine 400 coordinates ATP.

It belongs to the rhamnulokinase family. The cofactor is Mg(2+).

It catalyses the reaction L-rhamnulose + ATP = L-rhamnulose 1-phosphate + ADP + H(+). The protein operates within carbohydrate degradation; L-rhamnose degradation; glycerone phosphate from L-rhamnose: step 2/3. Involved in the catabolism of L-rhamnose (6-deoxy-L-mannose). Catalyzes the transfer of the gamma-phosphate group from ATP to the 1-hydroxyl group of L-rhamnulose to yield L-rhamnulose 1-phosphate. This chain is Rhamnulokinase, found in Halalkalibacterium halodurans (strain ATCC BAA-125 / DSM 18197 / FERM 7344 / JCM 9153 / C-125) (Bacillus halodurans).